The chain runs to 64 residues: Small ribosomal subunit protein bS18c (64 aa).

Belongs to the bacterial ribosomal protein bS18 family. In terms of assembly, part of the 30S ribosomal subunit.

The protein resides in the plastid. Its subcellular location is the chloroplast. The chain is Small ribosomal subunit protein bS18c (rps18) from Bigelowiella natans (Pedinomonas minutissima).